A 400-amino-acid chain; its full sequence is MSAFRTLDDAGSLKGKRVLMRVDLNVPMESGRVTDATRIERVAPTIREVAEQGAKVILLAHFGRPKGKREPKDSLEPVVPALGAALGRDVAFAADCVGDAAAQAVAALKDGDVLLLENTRYHAGEEKNDAAFADALAANGDVYVNEAFSAAHRAHASTEGLAHRLPAYAGREMQAELDALTKGLESPQRPVIALVGGAKVSSKIDLLENLVAKVDMLVIGGGMANTFLHAQGKAVGKSLCEKDLAETATRILAAAEKAGCRIILPVDAVAASEFKARAPHETVPVDAVPDASMILDAGPRSVAEINAAIDGAKTLVWNGPLGAFELAPFDAATVATAKHAAARTKDGQLVSVAGGGDTVAALNHAGVGQDFTYVSTAGGAFLEWLEGKALPGVEALRAKG.

Residues 23 to 25 (DLN), Arg-38, 61 to 64 (HFGR), Arg-120, and Arg-153 contribute to the substrate site. ATP contacts are provided by residues Lys-203, Glu-325, and 355-358 (GGDT).

The protein belongs to the phosphoglycerate kinase family. In terms of assembly, monomer.

It is found in the cytoplasm. It catalyses the reaction (2R)-3-phosphoglycerate + ATP = (2R)-3-phospho-glyceroyl phosphate + ADP. Its pathway is carbohydrate degradation; glycolysis; pyruvate from D-glyceraldehyde 3-phosphate: step 2/5. The polypeptide is Phosphoglycerate kinase (Methylobacterium radiotolerans (strain ATCC 27329 / DSM 1819 / JCM 2831 / NBRC 15690 / NCIMB 10815 / 0-1)).